Consider the following 279-residue polypeptide: Tryptophan synthase alpha chain (279 aa).

Active-site proton acceptor residues include Glu50 and Asp61.

Belongs to the TrpA family. In terms of assembly, tetramer of two alpha and two beta chains.

The catalysed reaction is (1S,2R)-1-C-(indol-3-yl)glycerol 3-phosphate + L-serine = D-glyceraldehyde 3-phosphate + L-tryptophan + H2O. Its pathway is amino-acid biosynthesis; L-tryptophan biosynthesis; L-tryptophan from chorismate: step 5/5. In terms of biological role, the alpha subunit is responsible for the aldol cleavage of indoleglycerol phosphate to indole and glyceraldehyde 3-phosphate. This Brucella abortus (strain S19) protein is Tryptophan synthase alpha chain.